Here is a 344-residue protein sequence, read N- to C-terminus: MSYALLRPFLFNMDPEHAHEMTLSLLDKAHKARVLGLVYGQSMQPTDCMGLQFSNPVGLAAGLDKNGDYIDALAELGFGFIEVGTVTPKPQVGNDRPRLFRLKQADAIINRMGFNNEGVDYLIENVKRCKYKGNIGINIGKNAATPVEQAADDYVYCLERVYPHASYITVNISSPNTKNLRDLQSGEALTHLLDAIKNRHSQLATEYGFYVPLVLKVAPDLDPLQVDYISQQLLDFEIDGLIATNTTLSRVGVEDLPDGDQAGGLSGRPVSHISTQILQQFSDQLDGKVALIGVGGIDSGAKAVKKIEAGADMVQLYSGLIYKGPGLVQSCIQSIGGYYDAMEN.

Residues 61 to 65 and threonine 85 each bind FMN; that span reads AGLDK. Lysine 65 lines the substrate pocket. Residue 110 to 114 participates in substrate binding; it reads NRMGF. Asparagine 138 and asparagine 171 together coordinate FMN. A substrate-binding site is contributed by asparagine 171. Serine 174 functions as the Nucleophile in the catalytic mechanism. Residue asparagine 176 participates in substrate binding. 2 residues coordinate FMN: lysine 216 and threonine 244. Position 245-246 (245-246) interacts with substrate; sequence NT. Residues glycine 267, glycine 296, and 317-318 each bind FMN; that span reads YS.

The protein belongs to the dihydroorotate dehydrogenase family. Type 2 subfamily. Monomer. FMN is required as a cofactor.

Its subcellular location is the cell membrane. The enzyme catalyses (S)-dihydroorotate + a quinone = orotate + a quinol. It participates in pyrimidine metabolism; UMP biosynthesis via de novo pathway; orotate from (S)-dihydroorotate (quinone route): step 1/1. In terms of biological role, catalyzes the conversion of dihydroorotate to orotate with quinone as electron acceptor. This Psychrobacter arcticus (strain DSM 17307 / VKM B-2377 / 273-4) protein is Dihydroorotate dehydrogenase (quinone).